A 940-amino-acid polypeptide reads, in one-letter code: Fibronectin-binding protein B (940 aa).

A signal peptide spans 1–36; the sequence is MKSNLRYGIRKHKLGAASVFLGTMIVVGMGQEKEAA. The tract at residues 36 to 111 is disordered; that stretch reads AASEQNNTTV…PKVETSRVDL (76 aa). Over residues 38-92 the composition is skewed to polar residues; that stretch reads SEQNNTTVEESGSSATESKASETQTTTNNVNTIDETQSYSATSTEQPSQSTQVTT. Residues 162-480 are fibrinogen/elastin/tropoelastin-binding; sequence TGTDVTNKVE…AQGDGKDKLK (319 aa). 3 disordered regions span residues 676–746, 764–878, and 892–918; these read LGYE…NIID, IIEE…GKVV, and VPTK…NGML. Residues 681–718 form a D-1 repeat; the sequence is GQNSGNQSFEEDTEEDKPKYEQGGNIVDIDFDSVPQIH. The stretch at 719-756 is one D-2 repeat; it reads GQNNGNQSFEEDTEKDKPKYEQGGNIIDIDFDSVPHIH. One copy of the D-3 repeat lies at 757–795; it reads GFNKHTEIIEEDTNKDKPNYQFGGHNSVDFEEDTLPQVS. A compositionally biased stretch (basic and acidic residues) spans 764–774; it reads IIEEDTNKDKP. Polar residues predominate over residues 792–802; sequence PQVSGHNEGQQ. The D-4; truncated repeat unit spans residues 796 to 814; that stretch reads GHNEGQQTIEEDTTPPIVP. Positions 811 to 860 are enriched in pro residues; the sequence is PIVPPTPPTPEVPSEPETPTPPTPEVPSEPETPTPPTPEVPTEPGKPIPP. 3 WR repeats span residues 815 to 828, 829 to 842, and 857 to 870; these read PTPP…EPET and PIPP…KPSK. The short motif at 904–908 is the LPXTG sorting signal element; it reads LPETG. A Pentaglycyl murein peptidoglycan amidated threonine modification is found at threonine 907. Residues 908-940 constitute a propeptide, removed by sortase; the sequence is GGEESTNNGMLFGGLFSILGLALLRRNKKNHKA.

Interacts with host PLG; this interaction provides active plasmin on the surface of bacteria cells. Interacts with host histones.

It localises to the secreted. Its subcellular location is the cell wall. Functionally, multifunctional protein which promotes bacterial attachment to fibrinogen, elastin and fibronectin. Also promotes the accumulation phase and the primary attachment phase of biofilm formation. In addition, protects against the antimicrobial activity of histones. Mechanistically, captures histones and prevents them from reaching the bacterial membrane and simultaneously binds plasminogen, thereby promoting its conversion to plasmin to destroy the bound histones. In Staphylococcus aureus (strain USA300), this protein is Fibronectin-binding protein B.